Reading from the N-terminus, the 253-residue chain is Redox-sensing transcriptional repressor Rex (253 aa).

The H-T-H motif DNA-binding region spans 26 to 65; that stretch reads LYLRALTALSERSVPTVSSEELATAAGVNSAKLRKDFSYL. Position 100–105 (100–105) interacts with NAD(+); the sequence is GIGNLG. A disordered region spans residues 217-253; the sequence is RKAGEDSAAEDEGAPPMRATPASRKGPDGDMPAVMPA.

The protein belongs to the transcriptional regulatory Rex family. As to quaternary structure, homodimer.

The protein localises to the cytoplasm. Modulates transcription in response to changes in cellular NADH/NAD(+) redox state. The polypeptide is Redox-sensing transcriptional repressor Rex (Streptomyces griseus subsp. griseus (strain JCM 4626 / CBS 651.72 / NBRC 13350 / KCC S-0626 / ISP 5235)).